A 67-amino-acid polypeptide reads, in one-letter code: Small ribosomal subunit protein bS21 (67 aa).

The protein belongs to the bacterial ribosomal protein bS21 family.

The sequence is that of Small ribosomal subunit protein bS21 from Magnetococcus marinus (strain ATCC BAA-1437 / JCM 17883 / MC-1).